The chain runs to 105 residues: UPF0145 protein Sala_0338 (105 aa).

Belongs to the UPF0145 family.

In Sphingopyxis alaskensis (strain DSM 13593 / LMG 18877 / RB2256) (Sphingomonas alaskensis), this protein is UPF0145 protein Sala_0338.